We begin with the raw amino-acid sequence, 120 residues long: Ribosome-binding factor A (120 aa).

Belongs to the RbfA family. As to quaternary structure, monomer. Binds 30S ribosomal subunits, but not 50S ribosomal subunits or 70S ribosomes.

It localises to the cytoplasm. One of several proteins that assist in the late maturation steps of the functional core of the 30S ribosomal subunit. Associates with free 30S ribosomal subunits (but not with 30S subunits that are part of 70S ribosomes or polysomes). Required for efficient processing of 16S rRNA. May interact with the 5'-terminal helix region of 16S rRNA. The protein is Ribosome-binding factor A of Rickettsia conorii (strain ATCC VR-613 / Malish 7).